Reading from the N-terminus, the 308-residue chain is UDP-N-acetylenolpyruvoylglucosamine reductase (308 aa).

The FAD-binding PCMH-type domain occupies 24 to 187 (RVGGPADWLF…VSASLQGVPG (164 aa)). The active site involves Arg167. A disordered region spans residues 199 to 230 (QLDKRDQTQPTKERSAGSTFRNPAGFSSTGRA). A compositionally biased stretch (basic and acidic residues) spans 200 to 213 (LDKRDQTQPTKERS). The span at 214–228 (AGSTFRNPAGFSSTG) shows a compositional bias: polar residues. Ser216 (proton donor) is an active-site residue. Glu298 is a catalytic residue.

It belongs to the MurB family. Requires FAD as cofactor.

It localises to the cytoplasm. It catalyses the reaction UDP-N-acetyl-alpha-D-muramate + NADP(+) = UDP-N-acetyl-3-O-(1-carboxyvinyl)-alpha-D-glucosamine + NADPH + H(+). Its pathway is cell wall biogenesis; peptidoglycan biosynthesis. Its function is as follows. Cell wall formation. This chain is UDP-N-acetylenolpyruvoylglucosamine reductase, found in Ruegeria pomeroyi (strain ATCC 700808 / DSM 15171 / DSS-3) (Silicibacter pomeroyi).